Reading from the N-terminus, the 714-residue chain is Fatty acid oxidation complex subunit alpha (714 aa).

Residues 1-190 (MDTVSAFKLE…KAGLVDEVVP (190 aa)) are enoyl-CoA hydratase. The tract at residues 306–714 (GPLTSIAVLG…TFWPADERLT (409 aa)) is 3-hydroxyacyl-CoA dehydrogenase.

It in the N-terminal section; belongs to the enoyl-CoA hydratase/isomerase family. The protein in the central section; belongs to the 3-hydroxyacyl-CoA dehydrogenase family. Heterotetramer of two alpha chains (FadJ) and two beta chains (FadI).

Its subcellular location is the cytoplasm. The catalysed reaction is a (3S)-3-hydroxyacyl-CoA = a (2E)-enoyl-CoA + H2O. It carries out the reaction a 4-saturated-(3S)-3-hydroxyacyl-CoA = a (3E)-enoyl-CoA + H2O. It catalyses the reaction a (3S)-3-hydroxyacyl-CoA + NAD(+) = a 3-oxoacyl-CoA + NADH + H(+). The enzyme catalyses (3S)-3-hydroxybutanoyl-CoA = (3R)-3-hydroxybutanoyl-CoA. Its pathway is lipid metabolism; fatty acid beta-oxidation. Its function is as follows. Catalyzes the formation of a hydroxyacyl-CoA by addition of water on enoyl-CoA. Also exhibits 3-hydroxyacyl-CoA epimerase and 3-hydroxyacyl-CoA dehydrogenase activities. In Klebsiella pneumoniae (strain 342), this protein is Fatty acid oxidation complex subunit alpha.